Consider the following 151-residue polypeptide: Small ribosomal subunit protein uS15 (151 aa).

It belongs to the universal ribosomal protein uS15 family.

The protein is Small ribosomal subunit protein uS15 (RpS13) of Plutella xylostella (Diamondback moth).